The chain runs to 320 residues: Polyisoprenyl-teichoic acid--peptidoglycan teichoic acid transferase TagU (320 aa).

Residues 1–15 (MVSRTERKQHKKRRK) are Cytoplasmic-facing. Residues 16–36 (WPFWLGGILLVLLLLISGGIF) traverse the membrane as a helical; Signal-anchor for type II membrane protein segment. The Extracellular segment spans residues 37 to 320 (LIYNQVGAVV…SEITGHMQEQ (284 aa)).

The protein belongs to the LytR/CpsA/Psr (LCP) family.

Its subcellular location is the cell membrane. It functions in the pathway cell wall biogenesis. Functionally, may catalyze the final step in cell wall teichoic acid biosynthesis, the transfer of the anionic cell wall polymers (APs) from their lipid-linked precursor to the cell wall peptidoglycan (PG). This Oceanobacillus iheyensis (strain DSM 14371 / CIP 107618 / JCM 11309 / KCTC 3954 / HTE831) protein is Polyisoprenyl-teichoic acid--peptidoglycan teichoic acid transferase TagU.